Here is a 270-residue protein sequence, read N- to C-terminus: Methylthioribulose-1-phosphate dehydratase (270 aa).

Cys-122 provides a ligand contact to substrate. The Zn(2+) site is built by His-140 and His-142. Glu-165 acts as the Proton donor/acceptor in catalysis. A Zn(2+)-binding site is contributed by His-230.

The protein belongs to the aldolase class II family. MtnB subfamily. Zn(2+) serves as cofactor.

The protein resides in the cytoplasm. The catalysed reaction is 5-(methylsulfanyl)-D-ribulose 1-phosphate = 5-methylsulfanyl-2,3-dioxopentyl phosphate + H2O. Its pathway is amino-acid biosynthesis; L-methionine biosynthesis via salvage pathway; L-methionine from S-methyl-5-thio-alpha-D-ribose 1-phosphate: step 2/6. In terms of biological role, catalyzes the dehydration of methylthioribulose-1-phosphate (MTRu-1-P) into 2,3-diketo-5-methylthiopentyl-1-phosphate (DK-MTP-1-P). The polypeptide is Methylthioribulose-1-phosphate dehydratase (Candida albicans (strain WO-1) (Yeast)).